Consider the following 117-residue polypeptide: Large ribosomal subunit protein uL18 (117 aa).

The protein belongs to the universal ribosomal protein uL18 family. Part of the 50S ribosomal subunit; part of the 5S rRNA/L5/L18/L25 subcomplex. Contacts the 5S and 23S rRNAs.

Its function is as follows. This is one of the proteins that bind and probably mediate the attachment of the 5S RNA into the large ribosomal subunit, where it forms part of the central protuberance. The chain is Large ribosomal subunit protein uL18 from Polynucleobacter necessarius subsp. necessarius (strain STIR1).